A 638-amino-acid chain; its full sequence is Neuroendocrine convertase 2 (638 aa).

The signal sequence occupies residues 1 to 25 (MKGGCVSQWKAAAGLLFCVTVFASA). A propeptide spanning residues 26–109 (ERPVFTNHFL…QQEGFDRKKR (84 aa)) is cleaved from the precursor. The region spanning 129–453 (QWYLINTGQA…YGVLDAGAMV (325 aa)) is the Peptidase S8 domain. Residues aspartate 167 and histidine 208 each act as charge relay system in the active site. 2 cysteine pairs are disulfide-bonded: cysteine 225–cysteine 376 and cysteine 317–cysteine 347. Asparagine 375 carries an N-linked (GlcNAc...) asparagine glycan. The active-site Charge relay system is serine 384. One can recognise a P/Homo B domain in the interval 461-597 (TVPERFHCVG…TLMLHGSQSA (137 aa)). A disulfide bridge links cysteine 468 with cysteine 494. N-linked (GlcNAc...) asparagine glycosylation is found at asparagine 514 and asparagine 524.

Belongs to the peptidase S8 family. Furin subfamily.

It is found in the cytoplasmic vesicle. The protein resides in the secretory vesicle. The protein localises to the secreted. The catalysed reaction is Release of protein hormones and neuropeptides from their precursors, generally by hydrolysis of -Lys-Arg-|- bonds.. In terms of biological role, serine endopeptidase which is involved in the processing of hormone and other protein precursors at sites comprised of pairs of basic amino acid residues. Responsible for the release of glucagon from proglucagon in pancreatic A cells. This Sus scrofa (Pig) protein is Neuroendocrine convertase 2 (PCSK2).